Reading from the N-terminus, the 137-residue chain is Global transcriptional regulator Spx (137 aa).

A disulfide bond links cysteine 10 and cysteine 13.

The protein belongs to the ArsC family. Spx subfamily. In terms of assembly, interacts with the C-terminal domain of the alpha subunit of the RNAP.

It localises to the cytoplasm. In terms of biological role, global transcriptional regulator that plays a key role in stress response and exerts either positive or negative regulation of genes. Acts by interacting with the C-terminal domain of the alpha subunit of the RNA polymerase (RNAP). This interaction can enhance binding of RNAP to the promoter region of target genes and stimulate their transcription, or block interaction of RNAP with activator. The sequence is that of Global transcriptional regulator Spx from Streptococcus mutans serotype c (strain ATCC 700610 / UA159).